The primary structure comprises 209 residues: Na(+)-translocating NADH-quinone reductase subunit D (209 aa).

5 helical membrane passes run 42 to 62, 72 to 92, 103 to 123, 131 to 151, and 178 to 198; these read LVMT…ISLI, IIVQ…ILQA, VFVG…AYAM, FMDG…VGFL, and NGLF…IWGL.

It belongs to the NqrDE/RnfAE family. As to quaternary structure, composed of six subunits; NqrA, NqrB, NqrC, NqrD, NqrE and NqrF.

The protein localises to the cell inner membrane. The enzyme catalyses a ubiquinone + n Na(+)(in) + NADH + H(+) = a ubiquinol + n Na(+)(out) + NAD(+). In terms of biological role, NQR complex catalyzes the reduction of ubiquinone-1 to ubiquinol by two successive reactions, coupled with the transport of Na(+) ions from the cytoplasm to the periplasm. NqrA to NqrE are probably involved in the second step, the conversion of ubisemiquinone to ubiquinol. This chain is Na(+)-translocating NADH-quinone reductase subunit D, found in Photorhabdus laumondii subsp. laumondii (strain DSM 15139 / CIP 105565 / TT01) (Photorhabdus luminescens subsp. laumondii).